We begin with the raw amino-acid sequence, 138 residues long: Transcription antitermination protein NusB (138 aa).

This sequence belongs to the NusB family.

Its function is as follows. Involved in transcription antitermination. Required for transcription of ribosomal RNA (rRNA) genes. Binds specifically to the boxA antiterminator sequence of the ribosomal RNA (rrn) operons. In Helicobacter pylori (strain Shi470), this protein is Transcription antitermination protein NusB.